The primary structure comprises 329 residues: uncharacterized protein (329 aa).

Coiled coils occupy residues 57 to 120 and 225 to 251; these read KKEE…QEVT and QRQR…GNMM.

This is an uncharacterized protein from Homo sapiens (Human).